A 221-amino-acid chain; its full sequence is Orotidine 5'-phosphate decarboxylase (221 aa).

Substrate contacts are provided by residues D12, K34, 60–69, S117, 170–180, G193, and R194; these read DFKVADIPNT and PGVGAQGGKAS. The active-site Proton donor is K62.

The protein belongs to the OMP decarboxylase family. Type 1 subfamily. As to quaternary structure, homodimer.

It carries out the reaction orotidine 5'-phosphate + H(+) = UMP + CO2. It participates in pyrimidine metabolism; UMP biosynthesis via de novo pathway; UMP from orotate: step 2/2. In terms of biological role, catalyzes the decarboxylation of orotidine 5'-monophosphate (OMP) to uridine 5'-monophosphate (UMP). The sequence is that of Orotidine 5'-phosphate decarboxylase from Methanosarcina acetivorans (strain ATCC 35395 / DSM 2834 / JCM 12185 / C2A).